The chain runs to 229 residues: Uracil-DNA glycosylase (229 aa).

The Proton acceptor role is filled by D64.

It belongs to the uracil-DNA glycosylase (UDG) superfamily. UNG family.

Its subcellular location is the cytoplasm. It catalyses the reaction Hydrolyzes single-stranded DNA or mismatched double-stranded DNA and polynucleotides, releasing free uracil.. Excises uracil residues from the DNA which can arise as a result of misincorporation of dUMP residues by DNA polymerase or due to deamination of cytosine. The polypeptide is Uracil-DNA glycosylase (Geobacillus thermodenitrificans (strain NG80-2)).